A 489-amino-acid polypeptide reads, in one-letter code: 3-octaprenyl-4-hydroxybenzoate carboxy-lyase (489 aa).

Asn-172 provides a ligand contact to Mn(2+). Residues 175–177, 189–191, and 194–195 each bind prenylated FMN; these read IYR, RWL, and RG. Residue Glu-238 participates in Mn(2+) binding. The active-site Proton donor is the Asp-287.

It belongs to the UbiD family. Homohexamer. The cofactor is prenylated FMN. Mn(2+) is required as a cofactor.

The protein resides in the cell membrane. It carries out the reaction a 4-hydroxy-3-(all-trans-polyprenyl)benzoate + H(+) = a 2-(all-trans-polyprenyl)phenol + CO2. Its pathway is cofactor biosynthesis; ubiquinone biosynthesis. Its function is as follows. Catalyzes the decarboxylation of 3-octaprenyl-4-hydroxy benzoate to 2-octaprenylphenol, an intermediate step in ubiquinone biosynthesis. This Aeromonas hydrophila subsp. hydrophila (strain ATCC 7966 / DSM 30187 / BCRC 13018 / CCUG 14551 / JCM 1027 / KCTC 2358 / NCIMB 9240 / NCTC 8049) protein is 3-octaprenyl-4-hydroxybenzoate carboxy-lyase.